Reading from the N-terminus, the 352-residue chain is Photosystem II protein D1 (352 aa).

Thr2 carries the N-acetylthreonine modification. Residue Thr2 is modified to Phosphothreonine. Transmembrane regions (helical) follow at residues 29–46 (YIGW…TATS), 118–133 (HFLL…EWEL), and 142–156 (WIAV…AASA). His118 serves as a coordination point for chlorophyll a. Residue Tyr126 coordinates pheophytin a. [CaMn4O5] cluster-binding residues include Asp170 and Glu189. The helical transmembrane segment at 197–218 (FHMLGVAGVFGGSLFSAMHGSL) threads the bilayer. Residue His198 coordinates chlorophyll a. A quinone is bound by residues His215 and 264–265 (SF). Position 215 (His215) interacts with Fe cation. His272 is a binding site for Fe cation. Residues 274–288 (FLAAWPVIGIWFTAL) form a helical membrane-spanning segment. Residues His332, Glu333, Asp342, and Ala344 each coordinate [CaMn4O5] cluster. The propeptide occupies 345-352 (STNSSSNN).

Belongs to the reaction center PufL/M/PsbA/D family. In terms of assembly, PSII is composed of 1 copy each of membrane proteins PsbA, PsbB, PsbC, PsbD, PsbE, PsbF, PsbH, PsbI, PsbJ, PsbK, PsbL, PsbM, PsbT, PsbX, PsbY, PsbZ, Psb30/Ycf12, at least 3 peripheral proteins of the oxygen-evolving complex and a large number of cofactors. It forms dimeric complexes. Requires The D1/D2 heterodimer binds P680, chlorophylls that are the primary electron donor of PSII, and subsequent electron acceptors. It shares a non-heme iron and each subunit binds pheophytin, quinone, additional chlorophylls, carotenoids and lipids. D1 provides most of the ligands for the Mn4-Ca-O5 cluster of the oxygen-evolving complex (OEC). There is also a Cl(-1) ion associated with D1 and D2, which is required for oxygen evolution. The PSII complex binds additional chlorophylls, carotenoids and specific lipids. as cofactor. Tyr-161 forms a radical intermediate that is referred to as redox-active TyrZ, YZ or Y-Z. In terms of processing, C-terminally processed by CTPA; processing is essential to allow assembly of the oxygen-evolving complex and thus photosynthetic growth.

The protein resides in the plastid. Its subcellular location is the chloroplast thylakoid membrane. The catalysed reaction is 2 a plastoquinone + 4 hnu + 2 H2O = 2 a plastoquinol + O2. Functionally, this is one of the two reaction center proteins of photosystem II. In terms of biological role, photosystem II (PSII) is a light-driven water:plastoquinone oxidoreductase that uses light energy to abstract electrons from H(2)O, generating O(2) and a proton gradient subsequently used for ATP formation. It consists of a core antenna complex that captures photons, and an electron transfer chain that converts photonic excitation into a charge separation. The D1/D2 (PsbA/PsbD) reaction center heterodimer binds P680, the primary electron donor of PSII as well as several subsequent electron acceptors. This Chlamydomonas reinhardtii (Chlamydomonas smithii) protein is Photosystem II protein D1.